Reading from the N-terminus, the 336-residue chain is tRNA N6-adenosine threonylcarbamoyltransferase (336 aa).

Fe cation-binding residues include histidine 114 and histidine 118. Residues 136 to 140, aspartate 169, glycine 182, aspartate 186, and asparagine 275 contribute to the substrate site; that span reads LVSGG. Fe cation is bound at residue aspartate 301.

The protein belongs to the KAE1 / TsaD family. It depends on Fe(2+) as a cofactor.

Its subcellular location is the cytoplasm. The enzyme catalyses L-threonylcarbamoyladenylate + adenosine(37) in tRNA = N(6)-L-threonylcarbamoyladenosine(37) in tRNA + AMP + H(+). Its function is as follows. Required for the formation of a threonylcarbamoyl group on adenosine at position 37 (t(6)A37) in tRNAs that read codons beginning with adenine. Is involved in the transfer of the threonylcarbamoyl moiety of threonylcarbamoyl-AMP (TC-AMP) to the N6 group of A37, together with TsaE and TsaB. TsaD likely plays a direct catalytic role in this reaction. This Streptococcus pneumoniae (strain Hungary19A-6) protein is tRNA N6-adenosine threonylcarbamoyltransferase.